A 224-amino-acid polypeptide reads, in one-letter code: Fibrillarin-like rRNA/tRNA 2'-O-methyltransferase (224 aa).

S-adenosyl-L-methionine-binding positions include 82 to 83 (TT), 100 to 101 (EF), 125 to 126 (DA), and 145 to 148 (DVAQ).

Belongs to the methyltransferase superfamily. Fibrillarin family. In terms of assembly, interacts with nop5. Component of box C/D small ribonucleoprotein (sRNP) particles that contain rpl7ae, FlpA and nop5, plus a guide RNA.

Functionally, involved in pre-rRNA and tRNA processing. Utilizes the methyl donor S-adenosyl-L-methionine to catalyze the site-specific 2'-hydroxyl methylation of ribose moieties in rRNA and tRNA. Site specificity is provided by a guide RNA that base pairs with the substrate. Methylation occurs at a characteristic distance from the sequence involved in base pairing with the guide RNA. This is Fibrillarin-like rRNA/tRNA 2'-O-methyltransferase from Methanothermobacter thermautotrophicus (strain ATCC 29096 / DSM 1053 / JCM 10044 / NBRC 100330 / Delta H) (Methanobacterium thermoautotrophicum).